The primary structure comprises 153 residues: SKP1-like protein 5 (153 aa).

Positions 90–153 (MMAANYLNIQ…IREENQWAFQ (64 aa)) are interaction with the F-box domain of F-box proteins.

It belongs to the SKP1 family. As to quaternary structure, part of a SCF (SKP1-cullin-F-box) protein ligase complex. Interacts with PP2A13. Restricted to inflorescences, especially in the inflorescence meristem (IM).

It localises to the nucleus. Its pathway is protein modification; protein ubiquitination. In terms of biological role, involved in ubiquitination and subsequent proteasomal degradation of target proteins. Together with CUL1, RBX1 and a F-box protein, it forms a SCF E3 ubiquitin ligase complex. The functional specificity of this complex depends on the type of F-box protein. In the SCF complex, it serves as an adapter that links the F-box protein to CUL1. The protein is SKP1-like protein 5 (ASK5) of Arabidopsis thaliana (Mouse-ear cress).